Here is a 74-residue protein sequence, read N- to C-terminus: Omega-filistatoxin-Kh1a (74 aa).

Post-translationally, contains 6 disulfide bonds. Expressed by the venom gland.

The protein localises to the secreted. In terms of biological role, potently blocks vertebrate calcium channels Cav1 and Cav2. Is the most active on Cav2.2/CACNA1B (from HEK) (IC(50)=2.3 nM), followed by Cav2.1/CACNA1A (IC(50)=4.3 nM), Cav2.2/CACNA1B (from oocyte) (IC(50)=14.4 nM), Cav1.2/CACNA1C (IC(50)=26.8 nM), and Cav2.3/CACNA1E (IC(50)=96.4 nM). The sequence is that of Omega-filistatoxin-Kh1a from Kukulcania hibernalis (Southern house spider).